A 514-amino-acid polypeptide reads, in one-letter code: Carboxysome shell carbonic anhydrase (514 aa).

Residues 1 to 27 (MAYRNRNLASQTQRPLAPTAPRRRPVV) form a disordered region. Cys-175 contributes to the Zn(2+) binding site. The active-site Proton acceptor is the Asp-177. Zn(2+) contacts are provided by His-243 and Cys-254.

It belongs to the beta-class carbonic anhydrase family. CsoSCA subfamily. As to quaternary structure, homodimer. Requires Zn(2+) as cofactor.

Its subcellular location is the carboxysome. The enzyme catalyses hydrogencarbonate + H(+) = CO2 + H2O. Reversible hydration of carbon dioxide. Essential for photosynthetic carbon dioxide fixation, supplies CO(2) to RuBisCO (ribulose bisphosphate carboxylase, cbbL-cbbS) in the carboxysome. This is Carboxysome shell carbonic anhydrase from Prochlorococcus marinus (strain MIT 9313).